The sequence spans 255 residues: (R)-S-adenosyl-L-methionine hydrolase (255 aa).

Positions 9, 70, and 186 each coordinate adenosine. Residues Asn186, Ser227, Glu232, and Val235 each coordinate (R)-S-adenosyl-L-methionine. Residue Val235 participates in adenosine binding.

It belongs to the SAM hydrolase / SAM-dependent halogenase family. In terms of assembly, homotrimer.

The catalysed reaction is (R)-S-adenosyl-L-methionine + H2O = adenosine + L-methionine + H(+). Functionally, catalyzes the hydrolysis of S-adenosyl-L-methionine (SAM) into adenosine and L-methionine. Does not have chlorinase or fluorinase activity. In Thermus thermophilus (strain ATCC 27634 / DSM 579 / HB8), this protein is (R)-S-adenosyl-L-methionine hydrolase.